The primary structure comprises 223 residues: Deoxyribose-phosphate aldolase (223 aa).

D92 (proton donor/acceptor) is an active-site residue. The active-site Schiff-base intermediate with acetaldehyde is K153. K182 (proton donor/acceptor) is an active-site residue.

It belongs to the DeoC/FbaB aldolase family. DeoC type 1 subfamily.

It localises to the cytoplasm. The enzyme catalyses 2-deoxy-D-ribose 5-phosphate = D-glyceraldehyde 3-phosphate + acetaldehyde. The protein operates within carbohydrate degradation; 2-deoxy-D-ribose 1-phosphate degradation; D-glyceraldehyde 3-phosphate and acetaldehyde from 2-deoxy-alpha-D-ribose 1-phosphate: step 2/2. Its function is as follows. Catalyzes a reversible aldol reaction between acetaldehyde and D-glyceraldehyde 3-phosphate to generate 2-deoxy-D-ribose 5-phosphate. This chain is Deoxyribose-phosphate aldolase, found in Mycoplasmoides gallisepticum (strain R(low / passage 15 / clone 2)) (Mycoplasma gallisepticum).